Consider the following 158-residue polypeptide: Large ribosomal subunit protein uL30 (158 aa).

The protein belongs to the universal ribosomal protein uL30 family. As to quaternary structure, part of the 50S ribosomal subunit.

This Saccharolobus islandicus (strain Y.N.15.51 / Yellowstone #2) (Sulfolobus islandicus) protein is Large ribosomal subunit protein uL30.